Consider the following 200-residue polypeptide: MTGFKQHTGLVVPLDTANIDTDAIIPKQFLQKVTRTGFGQHLFNDWRFLDDAGQQENPDFIMNAPRYQGASILLARENFGCGSSREHAPWALADYGIQVMIAPSFADIFYGNSINNQMVPVRLTDQEVDELFQYVETNEGAEITVDLETMQVTANGKTYSFEIDEFRRHCLLNGLDNIGLTLQHADKIAEYEAKIPAFLV.

It belongs to the LeuD family. LeuD type 1 subfamily. Heterodimer of LeuC and LeuD.

It catalyses the reaction (2R,3S)-3-isopropylmalate = (2S)-2-isopropylmalate. It functions in the pathway amino-acid biosynthesis; L-leucine biosynthesis; L-leucine from 3-methyl-2-oxobutanoate: step 2/4. Catalyzes the isomerization between 2-isopropylmalate and 3-isopropylmalate, via the formation of 2-isopropylmaleate. The protein is 3-isopropylmalate dehydratase small subunit of Photobacterium profundum (strain SS9).